The primary structure comprises 75 residues: Translation initiation factor IF-1 (75 aa).

An S1-like domain is found at 1-72 (MSKQDLIEME…TKGRITYRLK (72 aa)).

The protein belongs to the IF-1 family. In terms of assembly, component of the 30S ribosomal translation pre-initiation complex which assembles on the 30S ribosome in the order IF-2 and IF-3, IF-1 and N-formylmethionyl-tRNA(fMet); mRNA recruitment can occur at any time during PIC assembly.

The protein localises to the cytoplasm. One of the essential components for the initiation of protein synthesis. Stabilizes the binding of IF-2 and IF-3 on the 30S subunit to which N-formylmethionyl-tRNA(fMet) subsequently binds. Helps modulate mRNA selection, yielding the 30S pre-initiation complex (PIC). Upon addition of the 50S ribosomal subunit IF-1, IF-2 and IF-3 are released leaving the mature 70S translation initiation complex. This is Translation initiation factor IF-1 from Synechocystis sp. (strain ATCC 27184 / PCC 6803 / Kazusa).